The following is a 180-amino-acid chain: NAD(P)H-quinone oxidoreductase subunit I, chloroplastic (180 aa).

2 4Fe-4S ferredoxin-type domains span residues 55 to 84 and 95 to 124; these read GRIHFEFDKCIACEVCVRVCPIDLPVVDWK and LNYSIDFGICIFCGNCVEYCPTNCLSMTEE. The [4Fe-4S] cluster site is built by C64, C67, C70, C74, C104, C107, C110, and C114.

It belongs to the complex I 23 kDa subunit family. As to quaternary structure, NDH is composed of at least 16 different subunits, 5 of which are encoded in the nucleus. Requires [4Fe-4S] cluster as cofactor.

The protein localises to the plastid. The protein resides in the chloroplast thylakoid membrane. It catalyses the reaction a plastoquinone + NADH + (n+1) H(+)(in) = a plastoquinol + NAD(+) + n H(+)(out). The catalysed reaction is a plastoquinone + NADPH + (n+1) H(+)(in) = a plastoquinol + NADP(+) + n H(+)(out). NDH shuttles electrons from NAD(P)H:plastoquinone, via FMN and iron-sulfur (Fe-S) centers, to quinones in the photosynthetic chain and possibly in a chloroplast respiratory chain. The immediate electron acceptor for the enzyme in this species is believed to be plastoquinone. Couples the redox reaction to proton translocation, and thus conserves the redox energy in a proton gradient. The polypeptide is NAD(P)H-quinone oxidoreductase subunit I, chloroplastic (Ranunculus macranthus (Large buttercup)).